Reading from the N-terminus, the 787-residue chain is Integrin beta-3 (787 aa).

The first 25 residues, 1 to 25, serve as a signal peptide directing secretion; sequence MRTRRPGQLWATLLALGALAGVVVG. Residues 27–717 are Extracellular-facing; sequence SNICTTRGVN…EEPECPKGPD (691 aa). Positions 29 to 75 constitute a PSI domain; the sequence is ICTTRGVNSCQQCLAVSPVCAWCSDESLPQNSPRCNLKKNLLKDKCS. 19 disulfides stabilise this stretch: Cys-30-Cys-48, Cys-38-Cys-460, Cys-41-Cys-63, Cys-51-Cys-74, Cys-202-Cys-209, Cys-257-Cys-298, Cys-399-Cys-411, Cys-431-Cys-458, Cys-462-Cys-482, Cys-473-Cys-485, Cys-487-Cys-496, Cys-498-Cys-528, Cys-511-Cys-526, Cys-520-Cys-531, Cys-533-Cys-546, Cys-548-Cys-569, Cys-553-Cys-567, Cys-561-Cys-572, and Cys-574-Cys-583. In terms of domain architecture, VWFA spans 134 to 376; sequence DYPVDIYYLM…QLIVDAYGKI (243 aa). Residues Ser-146 and Ser-148 each contribute to the Mg(2+) site. The Ca(2+) site is built by Ser-148, Asp-151, Asp-152, and Asp-183. The interval 202–209 is CX3CL1-binding; the sequence is CYTMKSTC. The interval 202–209 is involved in CX3CL1-, NRG1-, FGF1- and IGF1-binding; that stretch reads CYTMKSTC. 5 residues coordinate Ca(2+): Asn-240, Asp-242, Pro-244, Glu-245, and Asp-276. Glu-245 provides a ligand contact to Mg(2+). Residues 292–312 form a CX3CL1-binding region; it reads LPNDGRCHIGPDNHYSASTTM. N-linked (GlcNAc...) asparagine glycosylation is found at Asn-345 and Asn-396. 4 consecutive I-EGF domains span residues 462-497, 498-547, 548-584, and 585-624; these read CQAF…SMCE, CSEE…KYCE, CDDF…YYCN, and CTTR…DTCE. The N-linked (GlcNAc...) asparagine glycan is linked to Asn-477. Residue Asn-584 is glycosylated (N-linked (GlcNAc...) asparagine). Disulfide bonds link Cys-585–Cys-608, Cys-592–Cys-606, Cys-600–Cys-611, Cys-613–Cys-623, Cys-626–Cys-629, Cys-633–Cys-680, Cys-639–Cys-660, Cys-642–Cys-656, and Cys-688–Cys-712. Asn-679 carries N-linked (GlcNAc...) asparagine glycosylation. A helical transmembrane segment spans residues 718–738; it reads ILVVLLSVMGAILLIGLATLL. Residues 739-787 lie on the Cytoplasmic side of the membrane; the sequence is IWKLLITIHDRKEFAKFEEERARAKWDTANNPLYKEATSTFTNITYRGT. Thr-766 carries the post-translational modification Phosphothreonine. A Phosphotyrosine modification is found at Tyr-772. An LIR motif is present at residues 776–782; sequence TSTFTNI. Residue Thr-778 is modified to Phosphothreonine. Tyr-784 carries the post-translational modification Phosphotyrosine.

Belongs to the integrin beta chain family. Heterodimer of an alpha and a beta subunit. Beta-3 (ITGB3) associates with either alpha-IIB (ITGA2B) or alpha-V (ITGAV). Interacts with FLNB and COMP. Interacts with PDIA6 following platelet stimulation. Interacts with SYK; upon activation by ITGB3 promotes platelet adhesion. Interacts with MYO10. Interacts with DAB2. Interacts with FERMT2. Integrin ITGAV:ITGB3 interacts with FBLN5 (via N-terminus). Interacts with EMP2; regulates the levels of the heterodimer ITGA5:ITGB3 integrin expression on the plasma membrane. ITGAV:ITGB3 interacts with CCN3. ITGAV:ITGB3 and ITGA2B:ITGB3 interact with SELP (via C-type lectin domain); the interaction mediates cell-cell interaction and adhesion. ITGAV:ITGB3 interacts with AGRA2. ITGAV:ITGB3 is found in a ternary complex with CX3CR1 and CX3CL1. ITGAV:ITGB3 is found in a ternary complex with NRG1 and ERBB3. ITGAV:ITGB3 is found in a ternary complex with FGF1 and FGFR1. ITGAV:ITGB3 interacts with FGF2; it is likely that FGF2 can simultaneously bind ITGAV:ITGB3 and FGF receptors. ITGAV:ITGB3 binds to IL1B. ITGAV:ITGB3 is found in a ternary complex with IGF1 and IGF1R. ITGAV:ITGB3 interacts with IGF2. ITGAV:ITGB3 interacts with FBN1. ITGAV:ITGB3 interacts with CD9, CD81 and CD151 (via second extracellular domain). Interacts (via the allosteric site (site 2)) with CXCL12 in a CXCR4-independent manner. Interacts with MXRA8/DICAM; the interaction inhibits ITGAV:ITGB3 heterodimer formation. ITGAV:ITGB3 interacts with PTN. Forms a complex with PTPRZ1 and PTN that stimulates endothelial cell migration through ITGB3 Tyr-772 phosphorylation. ITGAV:ITGB3 interacts with SLC6A4. Interacts with SLC6A4 (via C-terminus); this interaction regulates SLC6A4 trafficking. ITGA2B:ITGB3 interacts with PPIA/CYPA; the interaction is ROS and PPIase activity-dependent and is increased in the presence of thrombin. Interacts with tensin TNS3; TNS3 also interacts with PEAK1, thus acting as an adapter molecule to bridge the association of PEAK1 with ITGB3. Interacts with TM4SF19. In terms of processing, phosphorylated on tyrosine residues in response to thrombin-induced platelet aggregation. Probably involved in outside-in signaling.

Its subcellular location is the cell membrane. It localises to the cell projection. The protein localises to the lamellipodium membrane. The protein resides in the cell junction. It is found in the focal adhesion. Its subcellular location is the postsynaptic cell membrane. It localises to the synapse. Integrin alpha-V/beta-3 (ITGAV:ITGB3) is a receptor for cytotactin, fibronectin, laminin, matrix metalloproteinase-2, osteopontin, osteomodulin, prothrombin, thrombospondin, vitronectin and von Willebrand factor. Integrin alpha-IIB/beta-3 (ITGA2B:ITGB3) is a receptor for fibronectin, fibrinogen, plasminogen, prothrombin, thrombospondin and vitronectin. Integrins alpha-IIB/beta-3 and alpha-V/beta-3 recognize the sequence R-G-D in a wide array of ligands. Integrin alpha-IIB/beta-3 recognizes the sequence H-H-L-G-G-G-A-K-Q-A-G-D-V in fibrinogen gamma chain. Following activation integrin alpha-IIB/beta-3 brings about platelet/platelet interaction through binding of soluble fibrinogen. This step leads to rapid platelet aggregation which physically plugs ruptured endothelial surfaces. Fibrinogen binding enhances SELP expression in activated platelets. ITGAV:ITGB3 binds to fractalkine (CX3CL1) and acts as its coreceptor in CX3CR1-dependent fractalkine signaling. ITGAV:ITGB3 binds to NRG1 (via EGF domain) and this binding is essential for NRG1-ERBB signaling. ITGAV:ITGB3 binds to FGF1 and this binding is essential for FGF1 signaling. ITGAV:ITGB3 binds to FGF2 and this binding is essential for FGF2 signaling. ITGAV:ITGB3 binds to IGF1 and this binding is essential for IGF1 signaling. ITGAV:ITGB3 binds to IGF2 and this binding is essential for IGF2 signaling. ITGAV:ITGB3 binds to IL1B and this binding is essential for IL1B signaling. ITGAV:ITGB3 binds to PLA2G2A via a site (site 2) which is distinct from the classical ligand-binding site (site 1) and this induces integrin conformational changes and enhanced ligand binding to site 1. ITGAV:ITGB3 acts as a receptor for fibrillin-1 (FBN1) and mediates R-G-D-dependent cell adhesion to FBN1. In brain, plays a role in synaptic transmission and plasticity. Involved in the regulation of the serotonin neurotransmission, is required to localize to specific compartments within the synapse the serotonin receptor SLC6A4 and for an appropriate reuptake of serotonin. Controls excitatory synaptic strength by regulating GRIA2-containing AMPAR endocytosis, which affects AMPAR abundance and composition. ITGAV:ITGB3 acts as a receptor for CD40LG. ITGAV:ITGB3 acts as a receptor for IBSP and promotes cell adhesion and migration to IBSP. This Rattus norvegicus (Rat) protein is Integrin beta-3.